The primary structure comprises 79 residues: D-alanyl carrier protein (79 aa).

One can recognise a Carrier domain in the interval Met-1–Arg-77. Ser-35 bears the O-(pantetheine 4'-phosphoryl)serine mark.

Belongs to the DltC family. In terms of processing, 4'-phosphopantetheine is transferred from CoA to a specific serine of apo-DCP.

Its subcellular location is the cytoplasm. It participates in cell wall biogenesis; lipoteichoic acid biosynthesis. Carrier protein involved in the D-alanylation of lipoteichoic acid (LTA). The loading of thioester-linked D-alanine onto DltC is catalyzed by D-alanine--D-alanyl carrier protein ligase DltA. The DltC-carried D-alanyl group is further transferred to cell membrane phosphatidylglycerol (PG) by forming an ester bond, probably catalyzed by DltD. D-alanylation of LTA plays an important role in modulating the properties of the cell wall in Gram-positive bacteria, influencing the net charge of the cell wall. The sequence is that of D-alanyl carrier protein from Streptococcus mutans serotype c (strain ATCC 700610 / UA159).